Consider the following 208-residue polypeptide: MTIQTFKSTDFDVFTVDGLEERMSAIKTNIHPKLEALGEQFAEYLSKQTDENFFYHVAKHARRKVNPPNDTWVAFSTNKRGYKMLPHFQIGLWGTHAFIYFGLIYECPQKVETAHAFLEHLNDLKTNIPNDFVWSIDHTKPSVKLHKTLETEDLQKMIERLATVKKAELLVGIHISPEEFSAMTNEQFLAKIESTMQSLLPLYALCNR.

The protein belongs to the UPF0637 family.

The sequence is that of UPF0637 protein BCB4264_A4063 from Bacillus cereus (strain B4264).